A 200-amino-acid polypeptide reads, in one-letter code: Rho GDP-dissociation inhibitor 2 (200 aa).

The disordered stretch occupies residues 1–40; sequence MTEKAPEPHVEEDDDELDGKLNYKPPPQKSLKELQEMDKD. Thr2 carries the post-translational modification N-acetylthreonine. At Lys20 the chain carries N6-acetyllysine. The residue at position 23 (Tyr23) is a Phosphotyrosine. N6-acetyllysine is present on residues Lys24, Lys39, Lys46, Lys101, and Lys123. The segment covering 30–40 has biased composition (basic and acidic residues); that stretch reads SLKELQEMDKD. Position 144 is a phosphoserine (Ser144). Lys174 is modified (N6-acetyllysine).

It belongs to the Rho GDI family. As to quaternary structure, interacts with RHOA. Interacts with RAC1. Interacts with RAC2. Interacts with CDC42.

Its subcellular location is the cytoplasm. It localises to the cytosol. Its function is as follows. Regulates the GDP/GTP exchange reaction of the Rho proteins by inhibiting the dissociation of GDP from them, and the subsequent binding of GTP to them. Regulates reorganization of the actin cytoskeleton mediated by Rho family members. The protein is Rho GDP-dissociation inhibitor 2 (ARHGDIB) of Bos taurus (Bovine).